The chain runs to 180 residues: Segregation and condensation protein B (180 aa).

The protein belongs to the ScpB family. In terms of assembly, homodimer. Homodimerization may be required to stabilize the binding of ScpA to the Smc head domains. Component of a cohesin-like complex composed of ScpA, ScpB and the Smc homodimer, in which ScpA and ScpB bind to the head domain of Smc. The presence of the three proteins is required for the association of the complex with DNA.

The protein localises to the cytoplasm. Functionally, participates in chromosomal partition during cell division. May act via the formation of a condensin-like complex containing Smc and ScpA that pull DNA away from mid-cell into both cell halves. The sequence is that of Segregation and condensation protein B from Staphylococcus aureus (strain MSSA476).